Consider the following 478-residue polypeptide: Putative malate transporter YflS (478 aa).

Helical transmembrane passes span 12 to 31, 41 to 57, 64 to 81, 96 to 118, 187 to 209, 222 to 244, 277 to 296, 300 to 319, 332 to 354, 364 to 386, 398 to 420, and 450 to 472; these read AVKL…IWFI, AWHL…GFIS, AIAI…TLSI, IVIA…ISYV, GFQG…PLIA, WTSW…PLVI, LSMV…GGSF, ATTT…VLTW, LTWF…VSWF, GFSW…YFFA, AFLA…LAFI, and WSIG…GLWW.

It belongs to the SLC13A/DASS transporter (TC 2.A.47) family. DIT1 subfamily.

The protein localises to the cell membrane. Its function is as follows. Might be a malate transporter. This Bacillus subtilis (strain 168) protein is Putative malate transporter YflS (yflS).